A 295-amino-acid chain; its full sequence is Ribosomal protein L11 methyltransferase (295 aa).

4 residues coordinate S-adenosyl-L-methionine: Thr-150, Gly-171, Asp-193, and Asn-232.

Belongs to the methyltransferase superfamily. PrmA family.

It is found in the cytoplasm. The enzyme catalyses L-lysyl-[protein] + 3 S-adenosyl-L-methionine = N(6),N(6),N(6)-trimethyl-L-lysyl-[protein] + 3 S-adenosyl-L-homocysteine + 3 H(+). Functionally, methylates ribosomal protein L11. The sequence is that of Ribosomal protein L11 methyltransferase from Methylobacillus flagellatus (strain ATCC 51484 / DSM 6875 / VKM B-1610 / KT).